Reading from the N-terminus, the 1851-residue chain is Protein lap4 (1851 aa).

LRR repeat units follow at residues 38 to 59 (TLEE…FFRL), 61 to 82 (RLRK…IQNF), 84 to 105 (NLVE…IKHL), 107 to 128 (SLQV…FSQL), 130 to 152 (NLTV…GSLT), 153 to 174 (QLES…ISQL), 176 to 197 (KLKR…LGYL), 199 to 220 (GLHE…LGLL), 222 to 243 (KLTY…ISGL), 245 to 267 (SLTD…AKLS), 268 to 289 (RLTI…LGNC), 291 to 312 (NMQE…IGQM), 314 to 335 (KLNN…IGQC), 337 to 358 (NLGV…LGNC), 360 to 382 (VLHV…VNLQ), and 383 to 403 (LKAV…QPDT). Disordered regions lie at residues 427–474 (PARD…KDLK), 584–641 (VGGS…VQHL), and 656–719 (SQER…PDNL). Residues serine 433 and serine 435 each carry the phosphoserine modification. Residues 438-461 (FEEREPSRTVVKFSEEATQEKETP) show a composition bias toward basic and acidic residues. A coiled-coil region spans residues 471-492 (KDLKAKAQKLKVERSRNEEHAN). Positions 589-601 (EVQDDDEQEDEFE) are enriched in acidic residues. Residues 620–639 (RPPKLHRRDTPHHLKNKRVQ) are compositionally biased toward basic residues. Over residues 656 to 672 (SQERNDTTPQHSLSGKV) the composition is skewed to polar residues. Residues 676–686 (IEEEEQLEVEQ) show a composition bias toward acidic residues. Residues 677-693 (EEEEQLEVEQEQQQQQQ) are a coiled coil. Residues serine 700, serine 702, and serine 705 each carry the phosphoserine modification. The 88-residue stretch at 731–818 (EIHIERTAAG…VLVLVVQREV (88 aa)) folds into the PDZ 1 domain. A phosphoserine mark is found at serine 834 and serine 837. The region spanning 929–1019 (HTTLIRDQIG…FVRLVLQREY (91 aa)) is the PDZ 2 domain. A phosphoserine mark is found at serine 1031 and serine 1041. The interval 1067–1150 (LATTTPTPKP…EAQPSSLRPL (84 aa)) is disordered. Composition is skewed to polar residues over residues 1080–1097 (ASIS…TNGF) and 1132–1149 (GSTT…SLRP). PDZ domains are found at residues 1239-1329 (EVVL…QHDP) and 1336-1428 (EVLL…CKGY). The segment covering 1448–1467 (NSSASCSGGSRQGSRASETG) has biased composition (polar residues). The tract at residues 1448-1485 (NSSASCSGGSRQGSRASETGSELSQSQSVSSLDHEEDE) is disordered. Residues 1468–1478 (SELSQSQSVSS) show a composition bias toward low complexity. 3 positions are modified to phosphoserine: serine 1475, serine 1477, and serine 1478. Threonine 1599 is subject to Phosphothreonine. Residues 1647–1669 (AESANSAGAPSPAVPASTPGSAP) show a composition bias toward low complexity. 2 disordered regions span residues 1647 to 1751 (AESA…KVFS) and 1772 to 1851 (LRRD…VFRS). Positions 1725–1751 (VSDKKRFFESAMEDQHKPTQKTDKVFS) are enriched in basic and acidic residues. Positions 1753 to 1790 (LSKDEVEKLRQEEERKIATLRRDKNSRLLDAANDNIDK) form a coiled coil. Acidic residues predominate over residues 1807-1816 (DDNDDSDQEE). A compositionally biased stretch (basic and acidic residues) spans 1831–1851 (HFDDAEDMRNPLDEIEAVFRS).

Belongs to the LAP (LRR and PDZ) protein family. During germ band extension, expression of isoform A occurs predominantly in neuroblasts derived from the neuro-ectoderm and later is restricted to CNS neurons and pole cells. Isoform C is strongly expressed in PNS and a subset of CNS neurons. In the adult, expressed in third antennal segment and maxillary palps, major olfactory organs and in Johnstons organ in the second antennal segment. Expression is also observed in cortical regions of the brain. Isoforms expressed in epithelia are coexpressed with dlg1 throughout development.

It is found in the cytoplasm. Its subcellular location is the apicolateral cell membrane. It localises to the cell junction. The protein resides in the septate junction. In terms of biological role, required for polarization of the embryonic, imaginal disk and follicular epithelia. Specifically restricts apical membrane determinants to the apical cell surface; acts to exclude crb from the basolateral domain and define adherens junction position. Regulates cellular growth and differentiation; acts as a tumor suppressor. Essential for odor guided behavior. The sequence is that of Protein lap4 from Drosophila melanogaster (Fruit fly).